Consider the following 497-residue polypeptide: Protein nucleotidyltransferase YdiU (497 aa).

ATP contacts are provided by Gly-88, Gly-90, Arg-91, Lys-110, Asp-122, Gly-123, Arg-173, and Arg-180. Residue Asp-249 is the Proton acceptor of the active site. Asn-250 and Asp-259 together coordinate Mg(2+). An ATP-binding site is contributed by Asp-259.

The protein belongs to the SELO family. The cofactor is Mg(2+). It depends on Mn(2+) as a cofactor.

The enzyme catalyses L-seryl-[protein] + ATP = 3-O-(5'-adenylyl)-L-seryl-[protein] + diphosphate. The catalysed reaction is L-threonyl-[protein] + ATP = 3-O-(5'-adenylyl)-L-threonyl-[protein] + diphosphate. It carries out the reaction L-tyrosyl-[protein] + ATP = O-(5'-adenylyl)-L-tyrosyl-[protein] + diphosphate. It catalyses the reaction L-histidyl-[protein] + UTP = N(tele)-(5'-uridylyl)-L-histidyl-[protein] + diphosphate. The enzyme catalyses L-seryl-[protein] + UTP = O-(5'-uridylyl)-L-seryl-[protein] + diphosphate. The catalysed reaction is L-tyrosyl-[protein] + UTP = O-(5'-uridylyl)-L-tyrosyl-[protein] + diphosphate. Functionally, nucleotidyltransferase involved in the post-translational modification of proteins. It can catalyze the addition of adenosine monophosphate (AMP) or uridine monophosphate (UMP) to a protein, resulting in modifications known as AMPylation and UMPylation. The sequence is that of Protein nucleotidyltransferase YdiU from Methylorubrum extorquens (strain CM4 / NCIMB 13688) (Methylobacterium extorquens).